The following is a 239-amino-acid chain: Prolyl hydroxylase EGLN3 (239 aa).

The interval 62-73 (AGPRAGVSKRHL) is beta(2)beta(3) 'finger-like' loop. A required for interaction with ADRB2 region spans residues 88 to 104 (CEAINFLLSLIDRLVLY). The region spanning 116–214 (ERSKAMVACY…RYAMTVWYFD (99 aa)) is the Fe2OG dioxygenase domain. The Fe cation site is built by histidine 135, aspartate 137, and histidine 196. Arginine 205 is a 2-oxoglutarate binding site.

Interacts with ADRB2; the interaction hydroxylates ADRB2 facilitating its ubiquitination by the VHL-E3 ligase complex. Interacts with PKM; the interaction hydroxylates PKM in hypoxia. Interacts with WDR83; the interaction leads to almost complete elimination of HIF-mediated reporter activity. Interacts with BCL2 (via its BH4 domain); the interaction disrupts the BAX-BCL4 complex inhibiting the anti-apoptotic activity of BCL2. Interacts with LIMD1, WTIP and AJUBA. It depends on Fe(2+) as a cofactor. The cofactor is L-ascorbate. Post-translationally, ubiquitinated by SIAH1 and/or SIAH2 in response to the unfolded protein response (UPR), leading to its degradation. As to expression, highly expressed in cardiac and smooth muscle. Also high expression in brain, skeletal muscle and kidney. Low levels in lung.

It localises to the nucleus. It is found in the cytoplasm. The enzyme catalyses L-prolyl-[protein] + 2-oxoglutarate + O2 = trans-4-hydroxy-L-prolyl-[protein] + succinate + CO2. It carries out the reaction L-prolyl-[hypoxia-inducible factor alpha subunit] + 2-oxoglutarate + O2 = trans-4-hydroxy-L-prolyl-[hypoxia-inducible factor alpha subunit] + succinate + CO2. Functionally, prolyl hydroxylase that mediates hydroxylation of proline residues in target proteins, such as PKM, TELO2, ATF4 and HIF1A. Target proteins are preferentially recognized via a LXXLAP motif. Cellular oxygen sensor that catalyzes, under normoxic conditions, the post-translational formation of 4-hydroxyproline in hypoxia-inducible factor (HIF) alpha proteins. Hydroxylates a specific proline found in each of the oxygen-dependent degradation (ODD) domains (N-terminal, NODD, and C-terminal, CODD) of HIF1A. Also hydroxylates HIF2A. Has a preference for the CODD site for both HIF1A and HIF2A. Hydroxylation on the NODD site by EGLN3 appears to require prior hydroxylation on the CODD site. Hydroxylated HIFs are then targeted for proteasomal degradation via the von Hippel-Lindau ubiquitination complex. Under hypoxic conditions, the hydroxylation reaction is attenuated allowing HIFs to escape degradation resulting in their translocation to the nucleus, heterodimerization with HIF1B, and increased expression of hypoxy-inducible genes. ELGN3 is the most important isozyme in limiting physiological activation of HIFs (particularly HIF2A) in hypoxia. Also hydroxylates PKM in hypoxia, limiting glycolysis. Under normoxia, hydroxylates and regulates the stability of ADRB2. Regulator of cardiomyocyte and neuronal apoptosis. In cardiomyocytes, inhibits the anti-apoptotic effect of BCL2 by disrupting the BAX-BCL2 complex. In neurons, has a NGF-induced proapoptotic effect, probably through regulating CASP3 activity. Also essential for hypoxic regulation of neutrophilic inflammation. Plays a crucial role in DNA damage response (DDR) by hydroxylating TELO2, promoting its interaction with ATR which is required for activation of the ATR/CHK1/p53 pathway. Also mediates hydroxylation of ATF4, leading to decreased protein stability of ATF4. This chain is Prolyl hydroxylase EGLN3, found in Mus musculus (Mouse).